Consider the following 548-residue polypeptide: Asparagine--tRNA ligase, cytoplasmic (548 aa).

Positions M1 to P25 are disordered. Positions V8–P25 are enriched in basic and acidic residues. S61 is modified (phosphoserine). The segment at M69 to R91 is disordered. Over residues H71–R91 the composition is skewed to basic and acidic residues. K244 bears the N6-acetyllysine mark. Phosphoserine is present on S482. K490 bears the N6-acetyllysine mark.

The protein belongs to the class-II aminoacyl-tRNA synthetase family. In terms of assembly, homodimer.

Its subcellular location is the cytoplasm. The catalysed reaction is tRNA(Asn) + L-asparagine + ATP = L-asparaginyl-tRNA(Asn) + AMP + diphosphate + H(+). Catalyzes the attachment of asparagine to tRNA(Asn) in a two-step reaction: asparagine is first activated by ATP to form Asn-AMP and then transferred to the acceptor end of tRNA(Asn). In addition to its essential role in protein synthesis, acts as a signaling molecule that induced migration of CCR3-expressing cells. Has an essential role in the development of the cerebral cortex, being required for proper proliferation of radial glial cells. This is Asparagine--tRNA ligase, cytoplasmic from Homo sapiens (Human).